We begin with the raw amino-acid sequence, 411 residues long: Secretion apparatus protein BsaZ (411 aa).

The next 4 membrane-spanning stretches (helical) occupy residues 28–48, 80–100, 137–157, and 175–195; these read IVALIVIATGALAAPALVDLT, IAAPFVLLCAAAGALPSLVQS, ALLYVGVFALTVRVFADLYHA, and IVLTVRLVLLFLLCALPVLIL. The interval 341–411 is disordered; the sequence is AANRGGPPPE…APARTGDQNA (71 aa). Low complexity predominate over residues 370–404; that stretch reads DACADNAFPDDAPPGAAAPNAGSPDSPAPDGGAPA.

Belongs to the type III secretion exporter family.

Its subcellular location is the cell membrane. Part of the bsa type III secretion system, is involved in the intracellular replication of invading bacteria inside the host cell. Probably necessary for the lysis of the vacuole membrane and escape into the host cell cytoplasm. The chain is Secretion apparatus protein BsaZ (bsaZ) from Burkholderia pseudomallei (strain 1106a).